The chain runs to 641 residues: Protein BCAP (641 aa).

Coiled-coil stretches lie at residues H83–D144, E191–E270, Q299–Q375, and F487–A599.

The protein belongs to the ODF2 family.

The protein localises to the cytoplasm. The protein resides in the cytoskeleton. Its subcellular location is the microtubule organizing center. It is found in the centrosome. It localises to the centriole. The protein localises to the centriolar satellite. The protein resides in the cilium basal body. Acts as a suppressor of ciliogenesis, specifically, the initiation of ciliogenesis. The chain is Protein BCAP (odf2l) from Xenopus laevis (African clawed frog).